The sequence spans 538 residues: MVKQLKFSEDARQAMLRGVDQLANAVKVTIGPKGRNVVLDKEFTAPLITNDGVTIAKEIELEDPYENMGAKLVQEVANKTNEIAGDGTTTATVLAQAMIQEGLKNVTSGANPVGLRQGIDKAVKVAVEALHENSQKVENKNEIAQVGAISAADEEIGRYISEAMEKVGNDGVITIEESNGLNTELEVVEGMQFDRGYQSPYMVTDSDKMVAELERPYFLVTDKKISSFQDILPLLEQVVQSNRPILIVADEVEGDALTNIVLNRMRGTFTAVAVKAPGFGDRRKAMLEDLAILTGAQVITDDLGLDLKDASIDMLGTASKVEVTKDNTTVVDGDGDENSIDARVSQLKSQIEETESDFDREKLQERLAKLAGGVAVIKVGAASETELKERKLRIEDALNSTRAAVEEGIVAGGGTALVNVYQKVSEIEAEGDIETGVNIVLKALTAPVRQIAENAGLEGSVIVERLKNAEPGVGFNAATNEWVNMLEEGIVDPTKVTRSALQHAASVAAMFLTTEAVVASIPEKNNDQPNMGGMPGMM.

ATP is bound by residues 29–32 (TIGP), 86–90 (DGTTT), Gly413, 476–478 (NAA), and Asp492.

It belongs to the chaperonin (HSP60) family. As to quaternary structure, forms a cylinder of 14 subunits composed of two heptameric rings stacked back-to-back. Interacts with the co-chaperonin GroES.

Its subcellular location is the cytoplasm. The catalysed reaction is ATP + H2O + a folded polypeptide = ADP + phosphate + an unfolded polypeptide.. Functionally, together with its co-chaperonin GroES, plays an essential role in assisting protein folding. The GroEL-GroES system forms a nano-cage that allows encapsulation of the non-native substrate proteins and provides a physical environment optimized to promote and accelerate protein folding. The sequence is that of Chaperonin GroEL from Staphylococcus aureus (strain NCTC 8325 / PS 47).